The primary structure comprises 654 residues: Protein fem-1 homolog A-like (654 aa).

ANK repeat units follow at residues 2–31, 40–70, 82–111, 115–145, 149–178, 182–211, and 214–243; these read DLHT…REEL, GGGT…SVEA, EGAP…SVNR, TNST…DLEV, HGHT…QVNR, KGNT…RMER, and YGMT…SHEQ. Ser-108 bears the Phosphoserine mark. The segment at 241-265 is disordered; sequence HEQLSGTELPGEGSSQMAGNHCSTP. Polar residues predominate over residues 253–263; that stretch reads GSSQMAGNHCS. TPR repeat units follow at residues 283–317 and 375–408; these read VEAL…RHQG and SYYI…QQNN. ANK repeat units follow at residues 519–561 and 565–594; these read NGFT…DPDS and DNNS…HMDA. Phosphoserine is present on Ser-608.

This sequence belongs to the fem-1 family. As to quaternary structure, component of a CRL2 E3 ubiquitin-protein ligase complex, also named ECS (Elongin BC-CUL2/5-SOCS-box protein) complex, composed of CUL2, Elongin BC (ELOB and ELOC), RBX1 and substrate-specific adapter FEM1A.

The protein resides in the mitochondrion. It localises to the cytoplasm. It participates in protein modification; protein ubiquitination. Functionally, substrate-recognition component of a Cul2-RING (CRL2) E3 ubiquitin-protein ligase complex of the DesCEND (destruction via C-end degrons) pathway, which recognizes a C-degron located at the extreme C terminus of target proteins, leading to their ubiquitination and degradation. The C-degron recognized by the DesCEND pathway is usually a motif of less than ten residues and can be present in full-length proteins, truncated proteins or proteolytically cleaved forms. The CRL2(FEM1A) complex specifically recognizes proteins with an arginine at the C-terminus: recognizes and binds proteins ending with -Lys/Arg-Xaa-Arg and -Lys/Arg-Xaa-Xaa-Arg C-degrons, such as SIL1 or OR51B2, leading to their ubiquitination and degradation. In Mus musculus (Mouse), this protein is Protein fem-1 homolog A-like.